Consider the following 131-residue polypeptide: RxLR effector protein 62 (131 aa).

A signal peptide spans 1-19 (MRLDILLFTLSSSTSLALS). Positions 49 to 60 (RHLREEPANEAR) match the RxLR-dEER motif. N61 carries N-linked (GlcNAc...) asparagine glycosylation.

Belongs to the RxLR effector family.

The protein resides in the secreted. It is found in the host cell. Functionally, secreted effector that suppresses callose deposition, a hallmark of pathogen-associated molecular pattern (PAMP)-triggered immunity (PTI) and renders host plants more susceptible to bacterial infection. Reduces host plant responsiveness to salicylic acid (SA) in haustoriated cells into which host-translocated effectors are delivered. The protein is RxLR effector protein 62 of Hyaloperonospora arabidopsidis (strain Emoy2) (Downy mildew agent).